The primary structure comprises 156 residues: Endoribonuclease YbeY (156 aa).

3 residues coordinate Zn(2+): His122, His126, and His132.

Belongs to the endoribonuclease YbeY family. Requires Zn(2+) as cofactor.

It is found in the cytoplasm. In terms of biological role, single strand-specific metallo-endoribonuclease involved in late-stage 70S ribosome quality control and in maturation of the 3' terminus of the 16S rRNA. The chain is Endoribonuclease YbeY from Geobacillus kaustophilus (strain HTA426).